The chain runs to 316 residues: DMOA farnesyltransferase nvfB (316 aa).

Helical transmembrane passes span 47 to 67 (VVGVVFGAAVAPTKLPATILL), 71 to 91 (LILVLWSLFLRSAGCVWNDVI), 115 to 135 (WNAVMLTAGIFACGGSLLSFL), 139 to 159 (CAIEALIEIFFALLYPFGKRF), 162 to 182 (FPQLILVNIGWAIPMSMHSLG), 191 to 211 (PTFFMFLFIALVIVMIDVVYS), 234 to 254 (IELLSYAFFYASTGALLAAGY), 258 to 278 (LGIPFTVLSVGGHFGGFLYFL), and 294 to 314 (KLACLIASLFWVVGLFVEYYL).

Belongs to the UbiA prenyltransferase family.

It is found in the membrane. It catalyses the reaction 3,5-dimethylorsellinate + (2E,6E)-farnesyl diphosphate = (3R)-3-farnesyl-6-hydroxy-2,3,5-trimethyl-4-oxocyclohexa-1,5-diene-1-carboxylate + diphosphate + H(+). Its pathway is secondary metabolite biosynthesis; terpenoid biosynthesis. In terms of biological role, DMOA farnesyltransferase; part of the gene cluster that mediates the biosynthesis of novofumigatonin, a heavily oxygenated meroterpenoid containing a unique orthoester moiety. The first step of the pathway is the synthesis of 3,5-dimethylorsellinic acid (DMOA) by the polyketide synthase nvfA via condensation of one acetyl-CoA starter unit with 3 malonyl-CoA units and 2 methylations. DMOA is then converted to farnesyl-DMOA by the farnesyltransferase nvfB. Epoxydation by FAD-dependent monooxygenase nvfK, followed by a protonation-initiated cyclization catalyzed by the terpene cyclase nvfL leads to the production of asnavolin H. The short chain dehydrogenase nvfC then as a 3-OH dehydrogenase of asnovolin H to yield chemesin D. There are two branches to synthesize asnovolin A from chemesin D. In one branch, chemesin D undergoes Baeyer-Villiger oxidation by nvfH, methylation by nvfJ, and enoyl reduction by the nvfM D enoylreductase that reduces the double bond between C-5'and C-6', to form respectively asnovolin I, asnovolin K, and asnovolin A. In the other branch, the methylation precedes the Baeyer-Villiger oxidation and the enoyl reduction to yield asnovolin A via the asnovolin J intermediate. Asnovolin A is further converted to fumigatonoid A by the Fe(II)/2-oxoglutarate-dependent dioxygenase nvfI that catalyzes an endoperoxidation reaction. The alpha/beta hydrolase nvfD then acts as an epimerase that converts fumigatonoid A to its C-5' epimer, which then undergoes spontaneous or nvfD-catalyzed lactonization. The following step utilizes the ketoreductase nvfG to produce fumigatonoid B. The dioxygenase nvfE further converts fumigatonoid B into fumigatonoid C. Finally the Fe(II)/2-oxoglutarate-dependent dioxygenase nvfF catalyzes two rounds of oxidation to transform fumigatonoid C into the end product, novofumigatonin A. This Aspergillus novofumigatus (strain IBT 16806) protein is DMOA farnesyltransferase nvfB.